The chain runs to 187 residues: Lipid A acyltransferase PagP (187 aa).

Residues 1-26 (MIVAKKYFLVLSFLFVQFALLPQAFS) form the signal peptide. Catalysis depends on residues His59, Asp102, and Ser103.

It belongs to the lipid A palmitoyltransferase family. In terms of assembly, homodimer.

The protein resides in the cell outer membrane. The catalysed reaction is a lipid A + a 1,2-diacyl-sn-glycero-3-phosphocholine = a hepta-acyl lipid A + a 2-acyl-sn-glycero-3-phosphocholine. It carries out the reaction a lipid IVA + a 1,2-diacyl-sn-glycero-3-phosphocholine = a lipid IVB + a 2-acyl-sn-glycero-3-phosphocholine. The enzyme catalyses a lipid IIA + a 1,2-diacyl-sn-glycero-3-phosphocholine = a lipid IIB + a 2-acyl-sn-glycero-3-phosphocholine. Functionally, transfers a fatty acid residue from the sn-1 position of a phospholipid to the N-linked hydroxyfatty acid chain on the proximal unit of lipid A or its precursors. The polypeptide is Lipid A acyltransferase PagP (Citrobacter koseri (strain ATCC BAA-895 / CDC 4225-83 / SGSC4696)).